A 316-amino-acid chain; its full sequence is Porphobilinogen deaminase (316 aa).

Cysteine 245 carries the post-translational modification S-(dipyrrolylmethanemethyl)cysteine.

The protein belongs to the HMBS family. In terms of assembly, monomer. Dipyrromethane is required as a cofactor.

The catalysed reaction is 4 porphobilinogen + H2O = hydroxymethylbilane + 4 NH4(+). The protein operates within porphyrin-containing compound metabolism; protoporphyrin-IX biosynthesis; coproporphyrinogen-III from 5-aminolevulinate: step 2/4. Its pathway is porphyrin-containing compound metabolism; chlorophyll biosynthesis. Tetrapolymerization of the monopyrrole PBG into the hydroxymethylbilane pre-uroporphyrinogen in several discrete steps. This is Porphobilinogen deaminase from Prochlorococcus marinus (strain MIT 9312).